The following is a 673-amino-acid chain: Estrogen receptor beta (673 aa).

The tract at residues 1–181 (MASSPGLDPH…SAVGKADMHF (181 aa)) is modulating. 2 NR C4-type zinc fingers span residues 182–202 (CAVC…CEGC) and 218–242 (CPAT…LRKC). The nuclear receptor DNA-binding region spans 182–247 (CAVCHDYASG…RLRKCYEVGM (66 aa)). The NR LBD domain maps to 316–552 (SPEEFISRIM…DLLLEMLDAN (237 aa)). The disordered stretch occupies residues 553-602 (TSSGGSQPSSSPSSETYSDQHQYPQPPSHLHPGSEQTTADHAIVPPLGPT). Residues 554-566 (SSGGSQPSSSPSS) show a composition bias toward low complexity.

It belongs to the nuclear hormone receptor family. NR3 subfamily. As to quaternary structure, binds DNA as a homodimer. Can form a heterodimer with ER-alpha. In terms of tissue distribution, abundant in the liver and testes, less abundant in the ovary and barely detectable in the muscle.

The protein localises to the nucleus. Binds estrogens with an affinity similar to that of ER-alpha, and activates expression of reporter genes containing estrogen response elements (ERE) in an estrogen-dependent manner. This Micropogonias undulatus (Atlantic croaker) protein is Estrogen receptor beta (esr2).